A 513-amino-acid chain; its full sequence is GMP synthase [glutamine-hydrolyzing] (513 aa).

The 190-residue stretch at 9–198 (LILVLDFGSQ…VRRVCECKGQ (190 aa)) folds into the Glutamine amidotransferase type-1 domain. Cys86 serves as the catalytic Nucleophile. Catalysis depends on residues His172 and Glu174. Positions 199-388 (WTMENFIEIE…LGIPEHLVWR (190 aa)) constitute a GMPS ATP-PPase domain. 226–232 (SGGVDSS) is an ATP binding site.

Homodimer.

The enzyme catalyses XMP + L-glutamine + ATP + H2O = GMP + L-glutamate + AMP + diphosphate + 2 H(+). The protein operates within purine metabolism; GMP biosynthesis; GMP from XMP (L-Gln route): step 1/1. Catalyzes the synthesis of GMP from XMP. The chain is GMP synthase [glutamine-hydrolyzing] from Staphylococcus aureus (strain MSSA476).